We begin with the raw amino-acid sequence, 1395 residues long: G2/mitotic-specific cyclin-B3 (1395 aa).

Residues 1–59 (MLLPLPPQSSKPVPKKSQSSKIVPSHHDPSEKTGENCQTKISPSSLQESPSSLQGALKK) are disordered. Residues 10 to 23 (SKPVPKKSQSSKIV) show a composition bias toward low complexity. The segment covering 25-34 (SHHDPSEKTG) has biased composition (basic and acidic residues). Positions 42–54 (SPSSLQESPSSLQ) are enriched in low complexity. A D-box motif is present at residues 60 to 68 (RSAFEDLTN). Disordered regions lie at residues 418-464 (LSIK…PTEE) and 1074-1122 (ATMT…DSSD). A compositionally biased stretch (basic and acidic residues) spans 419 to 431 (SIKEKPSTEKESF). Low complexity predominate over residues 1082–1093 (SRTTTESSACES).

This sequence belongs to the cyclin family. Cyclin AB subfamily. Interacts with CDK2 kinase. In terms of processing, ubiquitinated. Ubiquitination leads to its degradation during anaphase entry, after degradation of CCNB1. As to expression, testis specific. In testis, it is expressed in developing germ cells, but not in Leydig cells. Weakly or not expressed in other tissues.

Its subcellular location is the nucleus. Cyclins are positive regulatory subunits of the cyclin-dependent kinases (CDKs), and thereby play an essential role in the control of the cell cycle, notably via their destruction during cell division. Its tissue specificity suggest that it may be required during early meiotic prophase I. The polypeptide is G2/mitotic-specific cyclin-B3 (CCNB3) (Homo sapiens (Human)).